The primary structure comprises 97 residues: MKIVKEALAGTAESSDLMVKIAPAAGELEIEIYSDVIKQFGDQIRRVVKETLAAMEVYEGLVIIEDKGALDCVIRARLQSAVLRACEAQPLRWEALK.

Ser-14 is modified (O-(phosphoribosyl dephospho-coenzyme A)serine).

This sequence belongs to the CitD family. Oligomer with a subunit composition of (alpha,beta,gamma)6.

The protein resides in the cytoplasm. Covalent carrier of the coenzyme of citrate lyase. In Cronobacter sakazakii (strain ATCC BAA-894) (Enterobacter sakazakii), this protein is Citrate lyase acyl carrier protein.